Here is a 321-residue protein sequence, read N- to C-terminus: Glucokinase (321 aa).

Residue 8-13 participates in ATP binding; the sequence is GDVGGT.

It belongs to the bacterial glucokinase family.

It localises to the cytoplasm. The catalysed reaction is D-glucose + ATP = D-glucose 6-phosphate + ADP + H(+). In Salmonella choleraesuis (strain SC-B67), this protein is Glucokinase.